The primary structure comprises 455 residues: Keratin, type I cuticular Ha5 (455 aa).

Residues 1–97 (MASKCLKASF…FGEGILTGNE (97 aa)) are head. Positions 97 to 408 (EKETMQFLND…GLLDSEDCKL (312 aa)) constitute an IF rod domain. The interval 98 to 132 (KETMQFLNDRLASYLEKVRQLERENAELESRIRDW) is coil 1A. The interval 133 to 143 (CEQQVPYLCPD) is linker 1. Residues 144–244 (YQSYFQTIEE…HEEEVNSLRC (101 aa)) form a coil 1B region. The linker 12 stretch occupies residues 245 to 260 (QLGDRLNVEVDAAPPV). Residues 261–404 (DLNRVLNEMR…STYRGLLDSE (144 aa)) form a coil 2 region. Residues 405-455 (DCKLPCNPCAPDHSPSKSCLPCLPAASCGPGTAHTTCSPRPICVSCPGSRF) form a tail region.

It belongs to the intermediate filament family.

This is Keratin, type I cuticular Ha5 from Ovis aries (Sheep).